The primary structure comprises 282 residues: Bifunctional protein FolD (282 aa).

Residues 164 to 166 (GAS), isoleucine 189, and isoleucine 230 each bind NADP(+).

Belongs to the tetrahydrofolate dehydrogenase/cyclohydrolase family. As to quaternary structure, homodimer.

The catalysed reaction is (6R)-5,10-methylene-5,6,7,8-tetrahydrofolate + NADP(+) = (6R)-5,10-methenyltetrahydrofolate + NADPH. It carries out the reaction (6R)-5,10-methenyltetrahydrofolate + H2O = (6R)-10-formyltetrahydrofolate + H(+). It participates in one-carbon metabolism; tetrahydrofolate interconversion. Functionally, catalyzes the oxidation of 5,10-methylenetetrahydrofolate to 5,10-methenyltetrahydrofolate and then the hydrolysis of 5,10-methenyltetrahydrofolate to 10-formyltetrahydrofolate. The protein is Bifunctional protein FolD of Campylobacter jejuni (strain RM1221).